We begin with the raw amino-acid sequence, 507 residues long: Chromosomal replication initiator protein DnaA (507 aa).

Residues 1–112 (MTDDPGSGFT…PATDEADDTT (112 aa)) are domain I, interacts with DnaA modulators. Residues 99-162 (RIAPPATDEA…ERPRNTDSAT (64 aa)) are disordered. Polar residues predominate over residues 113–127 (VPPSENPATTSPDTT). The segment at 113 to 166 (VPPSENPATTSPDTTTDNDEIDDSAAARGDNQHSWPSYFTERPRNTDSATAGVT) is domain II. Positions 167 to 383 (SLNRRYTFDT…GALIRVTAFA (217 aa)) are domain III, AAA+ region. ATP is bound by residues G211, G213, K214, and T215. The segment at 384-507 (SLNKTPIDKA…TTRIRQRSKR (124 aa)) is domain IV, binds dsDNA.

Belongs to the DnaA family. As to quaternary structure, oligomerizes as a right-handed, spiral filament on DNA at oriC.

It is found in the cytoplasm. Plays an essential role in the initiation and regulation of chromosomal replication. ATP-DnaA binds to the origin of replication (oriC) to initiate formation of the DNA replication initiation complex once per cell cycle. Binds the DnaA box (a 9 base pair repeat at the origin) and separates the double-stranded (ds)DNA. Forms a right-handed helical filament on oriC DNA; dsDNA binds to the exterior of the filament while single-stranded (ss)DNA is stabiized in the filament's interior. The ATP-DnaA-oriC complex binds and stabilizes one strand of the AT-rich DNA unwinding element (DUE), permitting loading of DNA polymerase. After initiation quickly degrades to an ADP-DnaA complex that is not apt for DNA replication. Binds acidic phospholipids. The chain is Chromosomal replication initiator protein DnaA from Mycobacterium bovis (strain BCG / Tokyo 172 / ATCC 35737 / TMC 1019).